The chain runs to 645 residues: 1,4-alpha-glucan branching enzyme GlgB (645 aa).

Catalysis depends on Asp-309, which acts as the Nucleophile. Glu-352 functions as the Proton donor in the catalytic mechanism. Residues Val-619 to Arg-645 form a disordered region. Residues Arg-636 to Arg-645 are compositionally biased toward polar residues.

The protein belongs to the glycosyl hydrolase 13 family. GlgB subfamily. Monomer.

It catalyses the reaction Transfers a segment of a (1-&gt;4)-alpha-D-glucan chain to a primary hydroxy group in a similar glucan chain.. The protein operates within glycan biosynthesis; glycogen biosynthesis. Its function is as follows. Catalyzes the formation of the alpha-1,6-glucosidic linkages in glycogen by scission of a 1,4-alpha-linked oligosaccharide from growing alpha-1,4-glucan chains and the subsequent attachment of the oligosaccharide to the alpha-1,6 position. In Bacillus cereus (strain B4264), this protein is 1,4-alpha-glucan branching enzyme GlgB.